The chain runs to 352 residues: Phenylalanine--tRNA ligase alpha subunit (352 aa).

Mg(2+) is bound at residue glutamate 258.

Belongs to the class-II aminoacyl-tRNA synthetase family. Phe-tRNA synthetase alpha subunit type 1 subfamily. In terms of assembly, tetramer of two alpha and two beta subunits. Mg(2+) is required as a cofactor.

Its subcellular location is the cytoplasm. The catalysed reaction is tRNA(Phe) + L-phenylalanine + ATP = L-phenylalanyl-tRNA(Phe) + AMP + diphosphate + H(+). This chain is Phenylalanine--tRNA ligase alpha subunit, found in Staphylococcus aureus (strain bovine RF122 / ET3-1).